A 300-amino-acid chain; its full sequence is Cation-efflux pump FieF (300 aa).

4 helical membrane passes run 12–32 (AAIAATAMASLLLLIKIFAWW), 39–59 (ILAALVDSLVDIGASLTNLLV), 82–102 (AALAQSMFISGSALFLFLTGI), and 114–134 (PGVGVIVTIVALICTIILVSF). Zn(2+) contacts are provided by aspartate 45 and aspartate 49. Zn(2+) contacts are provided by histidine 153 and aspartate 157. The next 2 membrane-spanning stretches (helical) occupy residues 156–176 (SDVMMNGAILLALGLSWYGWH) and 178–198 (ADALFALGIGIYILYSALRMG).

It belongs to the cation diffusion facilitator (CDF) transporter (TC 2.A.4) family. FieF subfamily. In terms of assembly, homodimer.

It is found in the cell inner membrane. It catalyses the reaction Zn(2+)(in) + H(+)(out) = Zn(2+)(out) + H(+)(in). The enzyme catalyses Cd(2+)(in) + H(+)(out) = Cd(2+)(out) + H(+)(in). It carries out the reaction Fe(2+)(in) + H(+)(out) = Fe(2+)(out) + H(+)(in). Divalent metal cation transporter which exports Zn(2+), Cd(2+) and possibly Fe(2+). May be involved in zinc and iron detoxification by efflux. The polypeptide is Cation-efflux pump FieF (Shigella flexneri serotype 5b (strain 8401)).